A 115-amino-acid chain; its full sequence is NADH-ubiquinone oxidoreductase chain 3 (115 aa).

3 helical membrane-spanning segments follow: residues 4–24, 55–75, and 84–104; these read ILTLFINITLSLCLISIAFWL, FFLVGITFLLFDLEIALLLPL, and SYLTMTVSFMLVSALALGLAY.

Belongs to the complex I subunit 3 family. Core subunit of respiratory chain NADH dehydrogenase (Complex I) which is composed of 45 different subunits. Interacts with TMEM186. Interacts with TMEM242.

The protein resides in the mitochondrion inner membrane. The catalysed reaction is a ubiquinone + NADH + 5 H(+)(in) = a ubiquinol + NAD(+) + 4 H(+)(out). Its function is as follows. Core subunit of the mitochondrial membrane respiratory chain NADH dehydrogenase (Complex I) which catalyzes electron transfer from NADH through the respiratory chain, using ubiquinone as an electron acceptor. Essential for the catalytic activity of complex I. The protein is NADH-ubiquinone oxidoreductase chain 3 of Necromys lactens (Rufous-bellied bolo mouse).